The primary structure comprises 511 residues: GMP synthase [glutamine-hydrolyzing] (511 aa).

In terms of domain architecture, Glutamine amidotransferase type-1 spans 5–195; the sequence is AILVLDFGSQ…VFKICQAQIN (191 aa). Residue C82 is the Nucleophile of the active site. Active-site residues include H169 and E171. A GMPS ATP-PPase domain is found at 196–386; it reads WSLEGNLETI…LGIKKESLYR (191 aa). Position 223 to 229 (223 to 229) interacts with ATP; the sequence is SGGTDSL.

Homodimer.

It carries out the reaction XMP + L-glutamine + ATP + H2O = GMP + L-glutamate + AMP + diphosphate + 2 H(+). It participates in purine metabolism; GMP biosynthesis; GMP from XMP (L-Gln route): step 1/1. In terms of biological role, catalyzes the synthesis of GMP from XMP. The sequence is that of GMP synthase [glutamine-hydrolyzing] (guaA) from Borreliella burgdorferi (strain N40) (Borrelia burgdorferi).